A 142-amino-acid polypeptide reads, in one-letter code: SDDESGDDENGDDKDGDDDDKEEDGEDVSEEDEKADVGDDGDDDDNETGGNSDTNDDVDYGDGNDEAREIGDHSIQDIRDLILDAIHNKDGGEMDADNPLQNLPYGPDKLKELYLRSGGSHFKGQLLNITLGLGFCILFLLL.

Acidic residues-rich tracts occupy residues 1–47 (SDDE…DDNE) and 54–64 (TNDDVDYGDGN). The segment at 1-74 (SDDESGDDEN…DEAREIGDHS (74 aa)) is disordered. The Extracellular segment spans residues 1-123 (SDDESGDDEN…YLRSGGSHFK (123 aa)). Residues 65–74 (DEAREIGDHS) are compositionally biased toward basic and acidic residues. The chain crosses the membrane as a helical span at residues 124-141 (GQLLNITLGLGFCILFLL). Residue leucine 142 is a topological domain, cytoplasmic.

Component of the acid-insoluble and acid-soluble organic matrix of the aragonitic skeleton (at protein level).

Its subcellular location is the membrane. The polypeptide is Secreted acidic protein 1B (Acropora millepora (Staghorn coral)).